The sequence spans 97 residues: Exodeoxyribonuclease 7 small subunit (97 aa).

Residues 1–21 form a disordered region; the sequence is MAKTATPGACASDPGSGPLPE.

The protein belongs to the XseB family. In terms of assembly, heterooligomer composed of large and small subunits.

Its subcellular location is the cytoplasm. The catalysed reaction is Exonucleolytic cleavage in either 5'- to 3'- or 3'- to 5'-direction to yield nucleoside 5'-phosphates.. Functionally, bidirectionally degrades single-stranded DNA into large acid-insoluble oligonucleotides, which are then degraded further into small acid-soluble oligonucleotides. The chain is Exodeoxyribonuclease 7 small subunit from Burkholderia mallei (strain NCTC 10247).